The chain runs to 116 residues: MVGGEAAAAVEELISGVRRATDFAEQFRSYSESEKQWKARMEFILRHLPDYRDPPDGGGRLDQLLSLSMVWANHLFLGCSYNKDLLDKVMEMADGIEVEDLPQFTTRSELMKKHQS.

Met-1 is subject to N-acetylmethionine. Residues 24-116 (AEQFRSYSES…RSELMKKHQS (93 aa)) enclose the XRN2-binding (XTBD) domain.

It belongs to the CARF family. As to quaternary structure, interacts with XRN2; the interaction is direct.

The polypeptide is CDKN2AIP N-terminal-like protein (CDKN2AIPNL) (Bos taurus (Bovine)).